A 167-amino-acid chain; its full sequence is Interferon gamma (167 aa).

The first 23 residues, 1–23 (MNYTSFIFAFQLCIILCSSGYYC), serve as a signal peptide directing secretion. Pyrrolidone carboxylic acid is present on Gln-24. N-linked (GlcNAc...) asparagine glycans are attached at residues Asn-39 and Asn-107.

It belongs to the type II (or gamma) interferon family. As to quaternary structure, homodimer. Interacts with IFNGR1 (via extracellular domain); this interaction promotes IFNGR1 dimerization. Released primarily from activated T lymphocytes.

The protein localises to the secreted. Functionally, type II interferon produced by immune cells such as T-cells and NK cells that plays crucial roles in antimicrobial, antiviral, and antitumor responses by activating effector immune cells and enhancing antigen presentation. Primarily signals through the JAK-STAT pathway after interaction with its receptor IFNGR1 to affect gene regulation. Upon IFNG binding, IFNGR1 intracellular domain opens out to allow association of downstream signaling components JAK2, JAK1 and STAT1, leading to STAT1 activation, nuclear translocation and transcription of IFNG-regulated genes. Many of the induced genes are transcription factors such as IRF1 that are able to further drive regulation of a next wave of transcription. Plays a role in class I antigen presentation pathway by inducing a replacement of catalytic proteasome subunits with immunoproteasome subunits. In turn, increases the quantity, quality, and repertoire of peptides for class I MHC loading. Increases the efficiency of peptide generation also by inducing the expression of activator PA28 that associates with the proteasome and alters its proteolytic cleavage preference. Up-regulates as well MHC II complexes on the cell surface by promoting expression of several key molecules such as cathepsins B/CTSB, H/CTSH, and L/CTSL. Participates in the regulation of hematopoietic stem cells during development and under homeostatic conditions by affecting their development, quiescence, and differentiation. This is Interferon gamma (IFNG) from Felis catus (Cat).